The primary structure comprises 3259 residues: Golgin subfamily B member 1 (3259 aa).

An N-acetylmethionine modification is found at M1. Residues M1–R3235 are Cytoplasmic-facing. Phosphoserine occurs at positions 6, 17, 138, and 528. The stretch at E48 to L593 forms a coiled coil. Residues G119–E142 are disordered. Positions Q131 to E142 are enriched in basic and acidic residues. The disordered stretch occupies residues L624–I652. The span at V635–E650 shows a compositional bias: basic and acidic residues. S653 is modified (phosphoserine). 3 coiled-coil regions span residues D677–P1028, L1062–D1245, and G1301–H1779. Residues A944 to Y963 are disordered. A compositionally biased stretch (basic and acidic residues) spans S1747–I1763. Residues S1747–F1829 are disordered. 2 stretches are compositionally biased toward polar residues: residues Q1782–P1794 and S1802–S1820. Positions D1828–E3185 form a coiled coil. A phosphoserine mark is found at S2216, S2735, S2872, and S2884. The interval R2856–V2876 is disordered. A compositionally biased stretch (polar residues) spans S2865 to E2875. Residues T2998–Q3021 form a disordered region. S3037 is modified (phosphoserine). Residues I3107–Q3140 are disordered. Residues N3118–E3131 are compositionally biased toward basic and acidic residues. The helical transmembrane segment at V3236 to T3256 threads the bilayer. Over G3257–L3259 the chain is Lumenal.

Homodimer; disulfide-linked. Interacts with PLK3.

The protein resides in the golgi apparatus membrane. In terms of biological role, may participate in forming intercisternal cross-bridges of the Golgi complex. This Homo sapiens (Human) protein is Golgin subfamily B member 1 (GOLGB1).